The following is a 531-amino-acid chain: Histone-arginine methyltransferase CARMER (531 aa).

Residues 141 to 450 form the SAM-dependent MTase PRMT-type domain; that stretch reads ASQYFQFYGY…QSYDVTIDLH (310 aa). Residues Gln154, Arg163, Gly187, Glu209, Glu238, and Thr266 each contribute to the S-adenosyl-L-methionine site. The residue at position 501 (Arg501) is an Asymmetric dimethylarginine; by autocatalysis.

This sequence belongs to the class I-like SAM-binding methyltransferase superfamily. Protein arginine N-methyltransferase family. In terms of assembly, homodimer. The dimethylated protein is the major form.

It is found in the cytoplasm. Its subcellular location is the nucleus. It catalyses the reaction L-arginyl-[protein] + 2 S-adenosyl-L-methionine = N(omega),N(omega)-dimethyl-L-arginyl-[protein] + 2 S-adenosyl-L-homocysteine + 2 H(+). In terms of biological role, methylates (mono- and asymmetric dimethylation) the guanidino nitrogens of arginyl residues in proteins. May methylate histone H3 at 'Arg-17' and activate transcription via chromatin remodeling. In Drosophila persimilis (Fruit fly), this protein is Histone-arginine methyltransferase CARMER (Art4).